The sequence spans 212 residues: Redox-sensing transcriptional repressor Rex (212 aa).

The H-T-H motif DNA-binding region spans 17–56 (KYHRYLQELMENDVDRISSKELSEKIGFTASQIRQDLNCF). 91–96 (GAGNIG) contributes to the NAD(+) binding site.

The protein belongs to the transcriptional regulatory Rex family. In terms of assembly, homodimer.

Its subcellular location is the cytoplasm. In terms of biological role, modulates transcription in response to changes in cellular NADH/NAD(+) redox state. The polypeptide is Redox-sensing transcriptional repressor Rex (Clostridium perfringens (strain ATCC 13124 / DSM 756 / JCM 1290 / NCIMB 6125 / NCTC 8237 / Type A)).